We begin with the raw amino-acid sequence, 224 residues long: Transcription cofactor HES-6 (224 aa).

A disordered region spans residues 1–31 (MAPPAAPGRDRVGREDEDGWETRGDRKARKP). A compositionally biased stretch (basic and acidic residues) spans 8 to 25 (GRDRVGREDEDGWETRGD). The region spanning 25 to 77 (DRKARKPLVEKKRRARINESLQELRLLLAGAEVQAKLENAEVLELTVRRVQGV) is the bHLH domain. Residues 96 to 129 (FAAGYIQCMHEVHTFVSTCQAIDATVAAELLNHL) enclose the Orange domain. The span at 147–161 (DALAGPPRAPGRSGW) shows a compositional bias: low complexity. The segment at 147-205 (DALAGPPRAPGRSGWPAGGAPGSPIPSPPGPGDDLCSDLEEAPEAELSQAPAEGPDLVP) is disordered. The span at 181–190 (LCSDLEEAPE) shows a compositional bias: acidic residues. A WRPW motif motif is present at residues 221–224 (WRPW).

In terms of assembly, transcription repression requires formation of a complex with a corepressor protein of the Groucho/TLE family. Interacts with HES1.

It is found in the nucleus. Functionally, does not bind DNA itself but suppresses both HES1-mediated N box-dependent transcriptional repression and binding of HES1 to E box sequences. Also suppresses HES1-mediated inhibition of the heterodimer formed by ASCL1/MASH1 and TCF3/E47, allowing ASCL1 and TCF3 to up-regulate transcription in its presence. Promotes cell differentiation. This chain is Transcription cofactor HES-6, found in Homo sapiens (Human).